A 199-amino-acid chain; its full sequence is SCO2-like protein RC0042 (199 aa).

It belongs to the SCO1/2 family.

The chain is SCO2-like protein RC0042 from Rickettsia conorii (strain ATCC VR-613 / Malish 7).